The primary structure comprises 639 residues: Threonine--tRNA ligase (639 aa).

The TGS domain maps to 1 to 61; it reads MIHITLPDGS…TQDSPLSIVT (61 aa). The segment at 242 to 533 is catalytic; that stretch reads DHRKLGRELD…LIEEHAGALP (292 aa). Zn(2+) is bound by residues cysteine 333, histidine 384, and histidine 510.

The protein belongs to the class-II aminoacyl-tRNA synthetase family. In terms of assembly, homodimer. Zn(2+) serves as cofactor.

It is found in the cytoplasm. It carries out the reaction tRNA(Thr) + L-threonine + ATP = L-threonyl-tRNA(Thr) + AMP + diphosphate + H(+). In terms of biological role, catalyzes the attachment of threonine to tRNA(Thr) in a two-step reaction: L-threonine is first activated by ATP to form Thr-AMP and then transferred to the acceptor end of tRNA(Thr). Also edits incorrectly charged L-seryl-tRNA(Thr). This chain is Threonine--tRNA ligase, found in Acidovorax ebreus (strain TPSY) (Diaphorobacter sp. (strain TPSY)).